The chain runs to 258 residues: Phosphate import ATP-binding protein PstB (258 aa).

The 241-residue stretch at 13 to 253 folds into the ABC transporter domain; sequence ITVENLNLWY…PREKSTEDYI (241 aa). 45–52 contributes to the ATP binding site; that stretch reads GPSGCGKS.

It belongs to the ABC transporter superfamily. Phosphate importer (TC 3.A.1.7) family. The complex is composed of two ATP-binding proteins (PstB), two transmembrane proteins (PstC and PstA) and a solute-binding protein (PstS).

It is found in the cell membrane. The enzyme catalyses phosphate(out) + ATP + H2O = ADP + 2 phosphate(in) + H(+). Functionally, part of the ABC transporter complex PstSACB involved in phosphate import. Responsible for energy coupling to the transport system. This is Phosphate import ATP-binding protein PstB from Methanosarcina mazei (strain ATCC BAA-159 / DSM 3647 / Goe1 / Go1 / JCM 11833 / OCM 88) (Methanosarcina frisia).